The sequence spans 257 residues: High affinity immunoglobulin epsilon receptor subunit alpha (257 aa).

Positions 1-25 (MAPAMESPTLLCVALLFFAPDGVLA) are cleaved as a signal peptide. The Extracellular portion of the chain corresponds to 26–205 (VPQKPKVSLN…KAPREKYWLQ (180 aa)). 2 Ig-like domains span residues 30–110 (PKVS…EVFS) and 111–193 (DWLL…LNIT). Asparagine 46, asparagine 67, asparagine 75, asparagine 99, asparagine 160, asparagine 165, and asparagine 191 each carry an N-linked (GlcNAc...) asparagine glycan. Cysteine 51 and cysteine 93 are oxidised to a cystine. Residues cysteine 132 and cysteine 176 are joined by a disulfide bond. The helical transmembrane segment at 206–224 (FFIPLLVVILFAVDTGLFI) threads the bilayer. Residues 225–257 (STQQQVTFLLKIKRTRKGFRLLNPHPKPNPKNN) are Cytoplasmic-facing.

Tetramer of an alpha chain, a beta chain, and two disulfide linked gamma chains. Interacts with IGHE (via CH3 region). Expressed in eosinophils.

The protein resides in the cell membrane. Functionally, high-affinity receptor for immunoglobulin epsilon/IgE. Mediates IgE effector functions in myeloid cells. Upon IgE binding and antigen/allergen cross-linking initiates signaling pathways that lead to myeloid cell activation and differentiation. On mast cells, basophils and eosinophils stimulates the secretion of vasoactive amines, lipid mediators and cytokines that contribute to inflammatory response, tissue remodeling and cytotoxicity against microbes. Triggers the immediate hypersensitivity response to allergens as a host defense mechanism against helminth parasites, pathogenic bacteria and venom toxicity. When dysregulated, it can elicit harmful life-threatening allergic and anaphylactic reactions. The sequence is that of High affinity immunoglobulin epsilon receptor subunit alpha (FCER1A) from Homo sapiens (Human).